A 101-amino-acid polypeptide reads, in one-letter code: MFDQTTQPEAHQLTVGKIETANGTIKPQLLRDAVKRAVTNFFAQMDGQEAEEVYEMVLCEVEAPLLDIIMQHTRGNQTRAANMLGINRGTLRKKLKKYGMN.

The H-T-H motif DNA-binding region spans 77 to 96 (QTRAANMLGINRGTLRKKLK).

The protein belongs to the transcriptional regulatory Fis family. In terms of assembly, homodimer.

Activates ribosomal RNA transcription. Plays a direct role in upstream activation of rRNA promoters. The chain is DNA-binding protein Fis from Shewanella loihica (strain ATCC BAA-1088 / PV-4).